We begin with the raw amino-acid sequence, 449 residues long: MTTVRFDYSKALQFVGQHEVDYMADTVKTLHGAIHNGTGAGSDFLGWVDLPTNYDKAEFEKIQAAAEKIKSDSDVLLVVGIGGSYLGARAAIEMLGHSFHNLLSKEERKAPQIIYAGHNISSTYLHDLFQVLEGKDVSVNIISKSGTTTEPAISFRLLKTFMEDKYGKAGAKDRIYATTDKARGALKTLADSEGYQTFVIPDDVGGRFSVLTPVGLLPIAAAGISIEELMAGARDAQVQFSNENLAENEAYQYAVVRNALYAKGKTIELLVNYEPALHYVSEWWKQLYGESEGKDFKGIFPAAVDFSTDLHSMGQYVQEGRRDLFETVIKVGQARHALTIEKDAQDLDGLNFLEGKSIQFVNDKAAEGTLLAHTDGQVPNLTVELPEMTPYHLGFLFYFFEKACAMSGYLLGVNPFDQPGVEAYKKNMFALLGKPGFEAEKAELEARLK.

The active-site Proton donor is the Glu-290. Residues His-311 and Lys-425 contribute to the active site.

Belongs to the GPI family.

It localises to the cytoplasm. It catalyses the reaction alpha-D-glucose 6-phosphate = beta-D-fructose 6-phosphate. Its pathway is carbohydrate biosynthesis; gluconeogenesis. It participates in carbohydrate degradation; glycolysis; D-glyceraldehyde 3-phosphate and glycerone phosphate from D-glucose: step 2/4. In terms of biological role, catalyzes the reversible isomerization of glucose-6-phosphate to fructose-6-phosphate. The sequence is that of Glucose-6-phosphate isomerase from Exiguobacterium sibiricum (strain DSM 17290 / CCUG 55495 / CIP 109462 / JCM 13490 / 255-15).